A 1417-amino-acid chain; its full sequence is MVSFFKTPIFILIIFLYLNEKVICSINENQNENDTISQNVNQHENINQNVNDNDNIEQLKSMIGNDELHKNLTILEKLILESLEKDKLKYPLLKQGTEQLIDISKFNKKNITDADDETYIIPTVQSTFHDIVKYEHLIKEQSIEIYNSDISDKIKKKIFIVRTLKTIKLMLIPLNSYKQNNDLKSALEELNNVFTNKEAQEESSPIGDHGTFFRKLLTHVRTIKENEDIENKGETLILGDNKIDVMNSNDFFFTTNSNVKFMENLDDITNQYGLGLINHLGPHLIALGHFTVLKLALKNYKNYFEAKSIKFFSWQKILEFSMSDRFKVLDMMCDHESVYYSEKKRRKTYLKVDRSNTSMECNILEYLLHYFNKYQLEIIKTTQDTDFDLHGMMEHKYIKDYFFSFMCNDPKECIIYHTNQFKKEANEENTFPEQEEPNRQISAFNLYLNYYYFMKRYSSYGVKKTLYVHLLNLTGLLNYDTRAYVTSLYLPGYYNAVEMSFTEEKEFSKLFESLIQCIEKCHSDQARQISKDSNLLNNITKCDLCKGAFLYANMKFDEVPSMLQKFYVYLTKGLKIQKVSSLIKTLDIYQDYSNYLSHDINWYTFLFLFRLTSFKEIAKKNVAEAMYLNIKDEDTFNKTVVTNYWYPSPIKKYYTLYVRKHIPNNLVDELEKLMKSGTLEKMKKSLTFLVHVNSFLQLDFFHQLNEPPLGLPRSYPLSLVLEHKFKEWMNSSPAGFYFSNYQNPYIRKDLHDKVLSQKFEPPKMNQWNKVLKSLIECAYDMYFEQRHVKNLYKYHNIYNINNKLMLMRDSIDLYKNNFDDVLFFADIFNMRKYMTATPVYKKVKDRVYHTLHSITGNSVNFYKYGIIYGFKVNKEILKEVVDELYSIYNFNTDIFTDTSFLQTVYLLFRRIEETYRTQRRDDKISVNNVFFMNVANNYSKLNKEEREIEIHNSMASRYYAKTMFAAFQMLFSTMLSNNVDNLDKAYGLSENIQVATSTSAFLTFAYVYNGSIMDSVTNSLLPPYAKKPITQLKYGKTFVFSNYFMLASKMYDMLNYKNLSLLCEYQAVASANFYSAKKVGQFLGRKFLPITTYFLVMRISWTHAFTTGQHLISAFGSPSSTANGKSNASGYKSPESFFFTHGLAAEASKYLFFYFFTNLYLDAYKSFPGGFGPAIKEQTQHVQEQTYERKPSVHSFNRNFFMELVNGFMYAFCFFAISQMYAYFENINFYITSNFRFLDRYYGVFNKYFINYAIIKLKEITSDLLIKYEREAYLSMKKYGYLGEVIAARLSPKDKIMNYVHETNEDIMSNLRRYDMENAFKNKMSTYVDDFAFFDDCGKNEQFLNERCDYCPVIEEVEETQLFTTTGDKNTNKTTEIKKQTSTYIDTEKMNEADSADSDDEKDSDTPDDELMISRFH.

The signal sequence occupies residues 1–24 (MVSFFKTPIFILIIFLYLNEKVIC). 4 cysteine pairs are disulfide-bonded: Cys-333/Cys-361, Cys-407/Cys-413, Cys-517/Cys-545, and Cys-521/Cys-542. The chain crosses the membrane as a helical span at residues 1204-1224 (LVNGFMYAFCFFAISQMYAYF). Residues 1383–1417 (TYIDTEKMNEADSADSDDEKDSDTPDDELMISRFH) form a disordered region. A compositionally biased stretch (acidic residues) spans 1394 to 1411 (DSADSDDEKDSDTPDDEL).

As to quaternary structure, self-associates. Component of the RhopH complex. RhopH complex is at least composed of CLAG3.1/CLAG3.2, RhopH2 and RhopH3 with a 1:1:1 subunit stoichiometry. CLAG3.1/CLAG3.2 mediates subunit association through independent contacts with RhopH2 and RhopH3, which do not directly interact with one another. Interacts with RhopH2. Interacts with RhopH3.

Its subcellular location is the host cell membrane. The protein resides in the host cytoplasm. It localises to the cytoplasmic vesicle. The protein localises to the secretory vesicle. It is found in the rhoptry. Functionally, participates in the formation of new permeability pathways in Plasmodium-infected erythrocytes enabling the uptake of nutrients from the blood plasma. The chain is Cytoadherence-linked asexual protein 3.1 from Plasmodium falciparum (isolate 3D7).